A 612-amino-acid polypeptide reads, in one-letter code: MAGGIVSPASLLDLIADIVEIPLNTGMFKKDCADLTRRVCLLTHLLEEIRDSTPIDSAASSSSENDWWSDLVVGLQAAKRLLSTARFQARDSSDGAAKRISFQFQCVTWKLEKALSNLPYDLYDISDEVGEQVELARSQLRRAMQRYGSLNSNKFSSALSEPMERDGFSNVIKIKAEEKLESVSETLHFGEEEEKQSSPPLRRSSSISLAYYLSKDADTDRLDKMVNKNTDESKKSDKLTIPVDFLCPVSLELMKDPVIVATGQTYERAYIQRWIDCGNLTCPKTQQKLENFTLTPNYVLRSLISRWCAEHNIEQPAGYINGRTKNSGDMSVIRALVQRLSSRSTEDRRNAVSEIRSLSKRSTDNRILIAEAGAIPVLVNLLTSEDVATQENAITCVLNLSIYENNKELIMFAGAVTSIVQVLRAGTMEARENAAATLFSLSLADENKIIIGGSGAIPALVDLLENGTPRGKKDAATALFNLCIYHGNKGRAVRAGIVTALVKMLSDSTRHRMVDEALTILSVLANNQDAKSAIVKANTLPALIGILQTDQTRNRENAAAILLSLCKRDTEKLITIGRLGAVVPLMDLSKNGTERGKRKAISLLELLRKACQ.

Residues 127-196 (DEVGEQVELA…LHFGEEEEKQ (70 aa)) adopt a coiled-coil conformation. The region spanning 240–314 (TIPVDFLCPV…SRWCAEHNIE (75 aa)) is the U-box domain. 5 ARM repeats span residues 363-402 (TDNR…NLSI), 404-443 (ENNK…SLSL), 445-484 (DENK…NLCI), 486-526 (HGNK…VLAN), and 528-567 (QDAK…SLCK).

The enzyme catalyses S-ubiquitinyl-[E2 ubiquitin-conjugating enzyme]-L-cysteine + [acceptor protein]-L-lysine = [E2 ubiquitin-conjugating enzyme]-L-cysteine + N(6)-ubiquitinyl-[acceptor protein]-L-lysine.. It functions in the pathway protein modification; protein ubiquitination. Its function is as follows. Functions as an E3 ubiquitin ligase. The sequence is that of U-box domain-containing protein 11 (PUB11) from Arabidopsis thaliana (Mouse-ear cress).